Consider the following 95-residue polypeptide: Small ribosomal subunit protein uS14 (95 aa).

It belongs to the universal ribosomal protein uS14 family. In terms of assembly, part of the 30S ribosomal subunit. Contacts proteins S3 and S10.

Functionally, binds 16S rRNA, required for the assembly of 30S particles and may also be responsible for determining the conformation of the 16S rRNA at the A site. In Fusobacterium nucleatum subsp. nucleatum (strain ATCC 25586 / DSM 15643 / BCRC 10681 / CIP 101130 / JCM 8532 / KCTC 2640 / LMG 13131 / VPI 4355), this protein is Small ribosomal subunit protein uS14.